The primary structure comprises 490 residues: Kinetochore protein Nuf2 homolog (490 aa).

2 coiled-coil regions span residues 146-280 (DRKF…KLEA) and 310-407 (DLID…SETI). 2 disordered regions span residues 346-365 (QSETHEQLRIEHTQKSEERQ) and 468-490 (IDAGENTENCDPQPNDSSFSVFK).

The protein belongs to the NUF2 family. In terms of assembly, component of the NDC80 complex, which is composed of at least ndc-80 and him-10. The NDC80 complex interacts with knl-1.

The protein resides in the nucleus. It localises to the chromosome. Its subcellular location is the centromere. The protein localises to the kinetochore. Functionally, acts as a component of the essential kinetochore-associated NDC80 complex, which is required for chromosome segregation in mitosis and meiosis and spindle checkpoint activity. The ndc-80 complex synergistically enhances the affinity of the ska-1 complex for microtubules and may allow the ndc-80 complex to track depolymerizing microtubules. This chain is Kinetochore protein Nuf2 homolog (him-10), found in Caenorhabditis elegans.